A 459-amino-acid polypeptide reads, in one-letter code: MKNISDYRNKKVLVLGLAKSGVNAARLLHKLGALVTVNDKQQFDDNKDAQELLADGMRVITGRHPVELLDEHFELMVKNPGIPYSNPMVKRAEALHMPIITEPELAYQVSEAQWIGITGTNGKTTTTTLIGLMLNQQRPHHAFDAGNIGIPVSQVAQKVGKDDTIVAELSSFQLCGIKTLHPHIAVLTNIYEAHLDWHGNRANYVAAKMRITMNQTPDDYFIMNWDLPEMHELAKQSKAQIVPFSRKNAEGARAQLIDGWLTFDGDRIMKASEMQIPGLHNIENALAAIAAVKLEGVGDDAIREVLRTFSGVKHRIQYLETIDGRRVYNDSKATNVEAATVALNAFDQPIVWLAGGLDRGLPMDALTPLVKKHVKSMVVFGQTAPLMAKIGKDAGVPVQTTENVMTAVPLAYEVSRPGDVILLSPAAASWDQYPNFEVRGDDFIKAVNQLKATVESGDK.

Residue 119-125 (GTNGKTT) participates in ATP binding.

The protein belongs to the MurCDEF family.

Its subcellular location is the cytoplasm. The catalysed reaction is UDP-N-acetyl-alpha-D-muramoyl-L-alanine + D-glutamate + ATP = UDP-N-acetyl-alpha-D-muramoyl-L-alanyl-D-glutamate + ADP + phosphate + H(+). The protein operates within cell wall biogenesis; peptidoglycan biosynthesis. Its function is as follows. Cell wall formation. Catalyzes the addition of glutamate to the nucleotide precursor UDP-N-acetylmuramoyl-L-alanine (UMA). The sequence is that of UDP-N-acetylmuramoylalanine--D-glutamate ligase from Lacticaseibacillus casei (strain BL23) (Lactobacillus casei).